The sequence spans 193 residues: Peptidyl-tRNA hydrolase (193 aa).

Residue Y17 participates in tRNA binding. H22 serves as the catalytic Proton acceptor. Positions 68, 70, and 116 each coordinate tRNA.

Belongs to the PTH family. Monomer.

It localises to the cytoplasm. The enzyme catalyses an N-acyl-L-alpha-aminoacyl-tRNA + H2O = an N-acyl-L-amino acid + a tRNA + H(+). In terms of biological role, hydrolyzes ribosome-free peptidyl-tRNAs (with 1 or more amino acids incorporated), which drop off the ribosome during protein synthesis, or as a result of ribosome stalling. Its function is as follows. Catalyzes the release of premature peptidyl moieties from peptidyl-tRNA molecules trapped in stalled 50S ribosomal subunits, and thus maintains levels of free tRNAs and 50S ribosomes. This is Peptidyl-tRNA hydrolase from Acinetobacter baumannii (strain AB307-0294).